The primary structure comprises 605 residues: Kelch-like protein 41b (605 aa).

A BTB domain is found at Val-32–Asp-102. Residues Cys-136–Glu-238 form the BACK domain. Kelch repeat units lie at residues Gln-345–Asn-397, Leu-398–Asn-446, Leu-447–Gly-494, Ile-496–Gly-541, and Leu-543–Asn-598.

It is found in the cytoplasm. Its subcellular location is the cytoskeleton. The protein resides in the sarcoplasmic reticulum membrane. The protein localises to the endoplasmic reticulum membrane. Functionally, involved in skeletal muscle development and maintenance. The polypeptide is Kelch-like protein 41b (Danio rerio (Zebrafish)).